A 362-amino-acid chain; its full sequence is Protein Wnt-16 (362 aa).

The signal sequence occupies residues 1–29 (MDRAALLGLSRLCALWAAVLALFPCGAQG). 3 disulfide bridges follow: cysteine 81-cysteine 92, cysteine 136-cysteine 144, and cysteine 146-cysteine 165. Asparagine 140 carries N-linked (GlcNAc...) asparagine glycosylation. The N-linked (GlcNAc...) asparagine glycan is linked to asparagine 186. Intrachain disulfides connect cysteine 218–cysteine 232, cysteine 220–cysteine 227, cysteine 291–cysteine 322, cysteine 307–cysteine 317, cysteine 321–cysteine 361, cysteine 337–cysteine 352, cysteine 339–cysteine 349, and cysteine 344–cysteine 345. Serine 224 is lipidated: O-palmitoleoyl serine; by PORCN. N-linked (GlcNAc...) asparagine glycosylation is present at asparagine 308.

It belongs to the Wnt family. In terms of processing, palmitoleoylation is required for efficient binding to frizzled receptors. Depalmitoleoylation leads to Wnt signaling pathway inhibition.

It localises to the secreted. The protein resides in the extracellular space. The protein localises to the extracellular matrix. Functionally, ligand for members of the frizzled family of seven transmembrane receptors. Probable developmental protein. May be a signaling molecule which affects the development of discrete regions of tissues. Is likely to signal over only few cell diameters. This chain is Protein Wnt-16 (WNT16), found in Bos taurus (Bovine).